We begin with the raw amino-acid sequence, 206 residues long: Threonine efflux protein (206 aa).

Residues Met1–Pro21 traverse the membrane as a helical segment. The Periplasmic segment spans residues Asp22–Leu43. The chain crosses the membrane as a helical span at residues Gly44–Ile64. Residues Glu65 to Lys66 are Cytoplasmic-facing. A helical transmembrane segment spans residues Met67–Tyr87. Residues Gln88–Arg149 lie on the Periplasmic side of the membrane. A helical transmembrane segment spans residues Trp150–Leu173. Residues Pro174–Arg206 lie on the Cytoplasmic side of the membrane.

This sequence belongs to the Rht family.

It is found in the cell inner membrane. Its function is as follows. Conducts the efflux of threonine. This chain is Threonine efflux protein (rhtC), found in Salmonella typhi.